Here is a 2554-residue protein sequence, read N- to C-terminus: DnaJ homolog subfamily C GRV2 (2554 aa).

2 disordered regions span residues 746–766 and 810–833; these read DVVD…KRLL and QRRA…GVDS. The span at 815–825 shows a compositional bias: polar residues; that stretch reads DSSSEASNPQA. Coiled coils occupy residues 925-951 and 1518-1546; these read TRQE…EDIS and RTAS…LKRQ. One can recognise a J domain in the interval 1524–1606; it reads LNEEISNISK…AQCILYRRYG (83 aa). 2 disordered regions span residues 1960–1994 and 2339–2366; these read IEDR…SSEG and SGEV…GQTP. Positions 1966-1977 are enriched in polar residues; that stretch reads SNDTPELQSSVA. Residues 1982 to 1994 show a composition bias toward basic and acidic residues; sequence IEEHSDHQPSSEG. A compositionally biased stretch (polar residues) spans 2352–2366; sequence VNESTDPSSLPGQTP.

Constitutively expressed in roots, hypocotyls, leaves (e.g. vascular tissues), stems, flowers (e.g. petals and stigmas), siliques and pollen.

It localises to the endosome membrane. Required for endosome formation, vacuolar protein sorting and determination of the embryo growth axis. Necessary for the transport of proteins into protein storage vacuoles (PSVs). Participates in vesicle trafficking from the endosome to the central vacuole. Involved in the regulation of shoot phototropism and gravitropism, probably through the positioning of specialized amyloplasts (statoliths) in endodermal cells. This Arabidopsis thaliana (Mouse-ear cress) protein is DnaJ homolog subfamily C GRV2 (GRV2).